The chain runs to 299 residues: Ethylmalonyl-CoA decarboxylase (299 aa).

Belongs to the enoyl-CoA hydratase/isomerase family.

Its subcellular location is the cytoplasm. The protein resides in the cytosol. The catalysed reaction is (2S)-ethylmalonyl-CoA + H(+) = butanoyl-CoA + CO2. It catalyses the reaction (S)-methylmalonyl-CoA + H(+) = propanoyl-CoA + CO2. The enzyme catalyses (2R)-ethylmalonyl-CoA + H(+) = butanoyl-CoA + CO2. Functionally, decarboxylates ethylmalonyl-CoA, a potentially toxic metabolite, to form butyryl-CoA, suggesting it might be involved in metabolite proofreading. Acts preferentially on (S)-ethylmalonyl-CoA but also has some activity on the (R)-isomer. Also has methylmalonyl-CoA decarboxylase activity at lower level. This Xenopus tropicalis (Western clawed frog) protein is Ethylmalonyl-CoA decarboxylase (echdc1).